The primary structure comprises 417 residues: Transmembrane protease serine 11G (417 aa).

Residues 1-22 (MYQPGILGRRKRVCKPWTVALT) are Cytoplasmic-facing. The chain crosses the membrane as a helical; Signal-anchor for type II membrane protein span at residues 23–43 (TTAALLALAVLIGLLVYFLVY). The Extracellular segment spans residues 44-417 (EEKTHYYQAS…RNWIKSKTNI (374 aa)). An SEA domain is found at 46–165 (KTHYYQASFW…PYLREMNAAQ (120 aa)). Residues 186–416 (IADGKPAGSN…YRNWIKSKTN (231 aa)) enclose the Peptidase S1 domain. An intrachain disulfide couples Cys-211 to Cys-227. Active-site charge relay system residues include His-226 and Asp-271. Disulfide bonds link Cys-336/Cys-352 and Cys-363/Cys-392. Ser-367 serves as the catalytic Charge relay system.

It belongs to the peptidase S1 family. As to expression, highest expression in lung and tongue. Also expressed in brain, colon, heart and liver. Isoform 1 is the predominant form in tongue whereas both isoforms are expressed in similar amounts in lung. At the cellular level, expression is confined to epithelial cells within the cleft of the circumvallate papillae extending into the ducts of the minor salivary glands, the respiratory epithelium of the nasal cavity and tear gland ducts.

The protein localises to the membrane. The protein is Transmembrane protease serine 11G (Tmprss11g) of Rattus norvegicus (Rat).